The following is a 597-amino-acid chain: Lipoprotein LpqB (597 aa).

A signal peptide spans 1 to 28 (MTPGSRSAMRSRSVCGAIALAVLVTVSG). A lipid anchor (N-palmitoyl cysteine) is attached at Cys-29. Residue Cys-29 is the site of S-diacylglycerol cysteine attachment. A compositionally biased stretch (polar residues) spans 39–51 (QAIGTINRDSPGS). The interval 39–59 (QAIGTINRDSPGSSVAAPAPG) is disordered.

The protein belongs to the LpqB lipoprotein family.

The protein localises to the cell membrane. This chain is Lipoprotein LpqB, found in Rhodococcus opacus (strain B4).